The primary structure comprises 479 residues: Shugoshin (479 aa).

Residues 36–76 (SLRIRSLESEVSNLLSENVSLREQIITLTQELERFEAARTL) are a coiled coil. 3 disordered regions span residues 109 to 145 (SRAV…GFLD), 220 to 247 (EHSL…QADT), and 263 to 479 (AKRK…SMPP). The segment covering 123-132 (QSRESGPKEV) has biased composition (basic and acidic residues). Residues 270–286 (EDDESLFESSPSEDDEF) show a composition bias toward acidic residues. 2 stretches are compositionally biased toward polar residues: residues 290–303 (RPAQ…QNEH) and 318–328 (QSPTLSSQNDH). Basic and acidic residues-rich tracts occupy residues 335-352 (PQSE…RVLE) and 379-388 (GYNEKSEKPL). Residues 400-411 (KNASPKKSSTRT) show a composition bias toward polar residues.

It belongs to the shugoshin family.

The protein localises to the nucleus. It is found in the chromosome. It localises to the centromere. Its function is as follows. Plays a central role in chromosome cohesion during cell division by preventing premature dissociation of cohesin complex from centromeres after prophase, when most of cohesin complex dissociates from chromosomes arms. This is Shugoshin (sgo1) from Emericella nidulans (strain FGSC A4 / ATCC 38163 / CBS 112.46 / NRRL 194 / M139) (Aspergillus nidulans).